The following is a 532-amino-acid chain: FRIGIDA-like protein 4a (532 aa).

The disordered stretch occupies residues 406-432; it reads KTEKRKPAAVPANKRTRASYNGPMPPA.

It belongs to the Frigida family. As to expression, expressed in leaves, shoot apex, flowers and during seed development.

This Arabidopsis thaliana (Mouse-ear cress) protein is FRIGIDA-like protein 4a (FRL4A).